A 26-amino-acid polypeptide reads, in one-letter code: Hemocyanin subunit 5 (26 aa).

It belongs to the tyrosinase family. Hemocyanin subfamily. Hemolymph.

The protein localises to the secreted. The protein resides in the extracellular space. Its function is as follows. Hemocyanins are copper-containing oxygen carriers occurring freely dissolved in the hemolymph of many mollusks and arthropods. This Maja squinado (Mediterranean spider crab) protein is Hemocyanin subunit 5.